Here is a 610-residue protein sequence, read N- to C-terminus: Elongation factor 4 (610 aa).

One can recognise a tr-type G domain in the interval 11–193 (EKIRNFSIIA…QIVEKVPAPT (183 aa)). GTP contacts are provided by residues 23–28 (DHGKST) and 140–143 (NKID).

The protein belongs to the TRAFAC class translation factor GTPase superfamily. Classic translation factor GTPase family. LepA subfamily.

It localises to the cell membrane. The enzyme catalyses GTP + H2O = GDP + phosphate + H(+). In terms of biological role, required for accurate and efficient protein synthesis under certain stress conditions. May act as a fidelity factor of the translation reaction, by catalyzing a one-codon backward translocation of tRNAs on improperly translocated ribosomes. Back-translocation proceeds from a post-translocation (POST) complex to a pre-translocation (PRE) complex, thus giving elongation factor G a second chance to translocate the tRNAs correctly. Binds to ribosomes in a GTP-dependent manner. This is Elongation factor 4 from Streptococcus agalactiae serotype Ia (strain ATCC 27591 / A909 / CDC SS700).